The following is a 256-amino-acid chain: uncharacterized protein (256 aa).

This sequence to B.subtilis LplA.

This is an uncharacterized protein from Niallia circulans (Bacillus circulans).